A 198-amino-acid polypeptide reads, in one-letter code: Probable molybdenum cofactor guanylyltransferase (198 aa).

GTP is bound by residues 9–11, Lys22, Asp66, and Asp95; that span reads LAG. A Mg(2+)-binding site is contributed by Asp95.

It belongs to the MobA family. Mg(2+) serves as cofactor.

Its subcellular location is the cytoplasm. The catalysed reaction is Mo-molybdopterin + GTP + H(+) = Mo-molybdopterin guanine dinucleotide + diphosphate. Functionally, transfers a GMP moiety from GTP to Mo-molybdopterin (Mo-MPT) cofactor (Moco or molybdenum cofactor) to form Mo-molybdopterin guanine dinucleotide (Mo-MGD) cofactor. This Clostridium perfringens (strain SM101 / Type A) protein is Probable molybdenum cofactor guanylyltransferase.